Here is a 25-residue protein sequence, read N- to C-terminus: Neuromedin-U-25 (25 aa).

Gln18 is subject to Pyrrolidone carboxylic acid. Asn25 carries the asparagine amide modification.

Belongs to the NmU family.

Its subcellular location is the secreted. Its function is as follows. Stimulates uterine smooth muscle contraction and causes selective vasoconstriction. This Canis lupus familiaris (Dog) protein is Neuromedin-U-25 (NMU).